The primary structure comprises 193 residues: Peptidyl-tRNA hydrolase 1 (193 aa).

Tyrosine 27 serves as a coordination point for tRNA. Histidine 32 serves as the catalytic Proton acceptor. The tRNA site is built by phenylalanine 80, asparagine 82, and asparagine 128.

It belongs to the PTH family. Monomer.

Its subcellular location is the cytoplasm. The enzyme catalyses an N-acyl-L-alpha-aminoacyl-tRNA + H2O = an N-acyl-L-amino acid + a tRNA + H(+). Hydrolyzes ribosome-free peptidyl-tRNAs (with 1 or more amino acids incorporated), which drop off the ribosome during protein synthesis, or as a result of ribosome stalling. Functionally, catalyzes the release of premature peptidyl moieties from peptidyl-tRNA molecules trapped in stalled 50S ribosomal subunits, and thus maintains levels of free tRNAs and 50S ribosomes. The polypeptide is Peptidyl-tRNA hydrolase 1 (Corynebacterium jeikeium (strain K411)).